A 374-amino-acid chain; its full sequence is Ribosomal RNA large subunit methyltransferase G (374 aa).

It belongs to the methyltransferase superfamily. RlmG family.

The protein localises to the cytoplasm. The enzyme catalyses guanosine(1835) in 23S rRNA + S-adenosyl-L-methionine = N(2)-methylguanosine(1835) in 23S rRNA + S-adenosyl-L-homocysteine + H(+). Specifically methylates the guanine in position 1835 (m2G1835) of 23S rRNA. The chain is Ribosomal RNA large subunit methyltransferase G from Pseudomonas syringae pv. tomato (strain ATCC BAA-871 / DC3000).